Reading from the N-terminus, the 103-residue chain is Large ribosomal subunit protein bL21 (103 aa).

It belongs to the bacterial ribosomal protein bL21 family. Part of the 50S ribosomal subunit. Contacts protein L20.

Its function is as follows. This protein binds to 23S rRNA in the presence of protein L20. The chain is Large ribosomal subunit protein bL21 from Cupriavidus metallidurans (strain ATCC 43123 / DSM 2839 / NBRC 102507 / CH34) (Ralstonia metallidurans).